The sequence spans 157 residues: Protein Smg homolog (157 aa).

It belongs to the Smg family.

This Shewanella pealeana (strain ATCC 700345 / ANG-SQ1) protein is Protein Smg homolog.